Consider the following 394-residue polypeptide: Phosphopentomutase (394 aa).

The Mn(2+) site is built by Asp13, Asp286, His291, Asp327, His328, and His339.

It belongs to the phosphopentomutase family. Mn(2+) is required as a cofactor.

It is found in the cytoplasm. The catalysed reaction is 2-deoxy-alpha-D-ribose 1-phosphate = 2-deoxy-D-ribose 5-phosphate. The enzyme catalyses alpha-D-ribose 1-phosphate = D-ribose 5-phosphate. It participates in carbohydrate degradation; 2-deoxy-D-ribose 1-phosphate degradation; D-glyceraldehyde 3-phosphate and acetaldehyde from 2-deoxy-alpha-D-ribose 1-phosphate: step 1/2. Its function is as follows. Isomerase that catalyzes the conversion of deoxy-ribose 1-phosphate (dRib-1-P) and ribose 1-phosphate (Rib-1-P) to deoxy-ribose 5-phosphate (dRib-5-P) and ribose 5-phosphate (Rib-5-P), respectively. The polypeptide is Phosphopentomutase (Bacillus cereus (strain G9842)).